Reading from the N-terminus, the 109-residue chain is T-cell surface glycoprotein CD1b (109 aa).

A signal peptide spans 1 to 18 (MLLLPLLLLAGRFPGGDN). 2 N-linked (GlcNAc...) asparagine glycosylation sites follow: N38 and N75.

Heterodimer with B2M (beta-2-microglobulin). Interacts with saposin C. Expressed on cortical thymocytes, on certain T-cell leukemias, and in various other tissues.

The protein localises to the cell membrane. It is found in the endosome membrane. It localises to the lysosome membrane. In terms of biological role, antigen-presenting protein that binds self and non-self lipid and glycolipid antigens and presents them to T-cell receptors on natural killer T-cells. In Oryctolagus cuniculus (Rabbit), this protein is T-cell surface glycoprotein CD1b (CD1B).